A 247-amino-acid chain; its full sequence is Cell division protein ZapD (247 aa).

This sequence belongs to the ZapD family. In terms of assembly, interacts with FtsZ.

Its subcellular location is the cytoplasm. Its function is as follows. Cell division factor that enhances FtsZ-ring assembly. Directly interacts with FtsZ and promotes bundling of FtsZ protofilaments, with a reduction in FtsZ GTPase activity. In Salmonella agona (strain SL483), this protein is Cell division protein ZapD.